The following is a 500-amino-acid chain: Xylan O-acetyltransferase 2 (500 aa).

Residues 1–25 (MGLPGRRNPLLSARRAAASLRRSRR) are Cytoplasmic-facing. Residues 26-43 (LPVYVAAVFFVASVLLMF) form a helical; Signal-anchor for type II membrane protein membrane-spanning segment. Topologically, residues 44–500 (RDEILYLTTA…RPPAAAGHVA (457 aa)) are lumenal. Positions 84 to 116 (PVLLGHGGKPEKHHSVTERHRPKVSAKRRPNKK) are disordered. Residues 91–102 (GKPEKHHSVTER) show a composition bias toward basic and acidic residues. Positions 103 to 116 (HRPKVSAKRRPNKK) are enriched in basic residues. Intrachain disulfides connect C143-C194, C165-C231, C174-C472, and C388-C468. 2 N-linked (GlcNAc...) asparagine glycosylation sites follow: N144 and N154. The GDS motif motif lies at 218-220 (GDS). S220 functions as the Nucleophile in the catalytic mechanism. Residues N260 and N416 are each glycosylated (N-linked (GlcNAc...) asparagine). The active-site Proton donor is D467. The DXXH motif motif lies at 467–470 (DCIH). H470 functions as the Proton acceptor in the catalytic mechanism.

The protein belongs to the PC-esterase family. TBL subfamily. In terms of tissue distribution, expressed at low levels in roots and leaves.

Its subcellular location is the golgi apparatus membrane. Its function is as follows. Xylan acetyltransferase required for 2-O- and 3-O-monoacetylation of xylosyl residues in xylan. Catalyzes the 2-O-acetylation of xylan, followed by nonenzymatic acetyl migration to the O-3 position, resulting in products that are monoacetylated at both O-2 and O-3 positions. This is Xylan O-acetyltransferase 2 from Oryza sativa subsp. japonica (Rice).